A 179-amino-acid chain; its full sequence is CMT1A duplicated region transcript 4 protein homolog (179 aa).

Positions 1–15 (MISRPESSLSGLESS) are enriched in low complexity. The disordered stretch occupies residues 1–20 (MISRPESSLSGLESSQEVQK).

The sequence is that of CMT1A duplicated region transcript 4 protein homolog (Cdrt4) from Mus musculus (Mouse).